Reading from the N-terminus, the 493-residue chain is Aspartyl/glutamyl-tRNA(Asn/Gln) amidotransferase subunit B (493 aa).

It belongs to the GatB/GatE family. GatB subfamily. In terms of assembly, heterotrimer of A, B and C subunits.

It catalyses the reaction L-glutamyl-tRNA(Gln) + L-glutamine + ATP + H2O = L-glutaminyl-tRNA(Gln) + L-glutamate + ADP + phosphate + H(+). The enzyme catalyses L-aspartyl-tRNA(Asn) + L-glutamine + ATP + H2O = L-asparaginyl-tRNA(Asn) + L-glutamate + ADP + phosphate + 2 H(+). Functionally, allows the formation of correctly charged Asn-tRNA(Asn) or Gln-tRNA(Gln) through the transamidation of misacylated Asp-tRNA(Asn) or Glu-tRNA(Gln) in organisms which lack either or both of asparaginyl-tRNA or glutaminyl-tRNA synthetases. The reaction takes place in the presence of glutamine and ATP through an activated phospho-Asp-tRNA(Asn) or phospho-Glu-tRNA(Gln). This is Aspartyl/glutamyl-tRNA(Asn/Gln) amidotransferase subunit B from Aromatoleum aromaticum (strain DSM 19018 / LMG 30748 / EbN1) (Azoarcus sp. (strain EbN1)).